The following is a 102-amino-acid chain: Integration host factor subunit beta (102 aa).

This sequence belongs to the bacterial histone-like protein family. As to quaternary structure, heterodimer of an alpha and a beta chain.

Its function is as follows. This protein is one of the two subunits of integration host factor, a specific DNA-binding protein that functions in genetic recombination as well as in transcriptional and translational control. The polypeptide is Integration host factor subunit beta (Rhizobium rhizogenes (strain K84 / ATCC BAA-868) (Agrobacterium radiobacter)).